A 330-amino-acid polypeptide reads, in one-letter code: Probable WRKY transcription factor 74 (330 aa).

The WRKY DNA-binding region spans 256–322 (KIADIPPDEY…YEGEHNHSRI (67 aa)).

The protein resides in the nucleus. Transcription factor. Interacts specifically with the W box (5'-(T)TGAC[CT]-3'), a frequently occurring elicitor-responsive cis-acting element. The sequence is that of Probable WRKY transcription factor 74 (WRKY74) from Arabidopsis thaliana (Mouse-ear cress).